A 343-amino-acid polypeptide reads, in one-letter code: Serpentine receptor class alpha-11 (343 aa).

Topologically, residues 1-24 (MSSPDTPVCASPQQMEMYNSHFYT) are extracellular. A helical membrane pass occupies residues 25 to 45 (CALFFNLLIAFTSMTLIIMAI). At 46 to 60 (RKLLTESIINTSTRM) the chain is on the cytoplasmic side. The chain crosses the membrane as a helical span at residues 61–81 (FLIVGLLCCSLHQTAYIVLRV). At 82–106 (QVIFQILFKLDQPCKLYYKAYDCKY) the chain is on the extracellular side. The chain crosses the membrane as a helical span at residues 107-127 (VTFSLVAGNTGMIFIQSAMTI). Over 128–146 (DRILTTVFTNLWPKLKYWP) the chain is Cytoplasmic. The chain crosses the membrane as a helical span at residues 147-167 (GVILSSFMIGCNFTNVQFIFW). The Extracellular portion of the chain corresponds to 168–192 (NDPLTDYVPTCGQFPPKSVGRFQKF). A helical membrane pass occupies residues 193–213 (LEIALYMSLAHMVINVIILYI). The Cytoplasmic portion of the chain corresponds to 214 to 247 (NVVQDRRQRLVSTHDQSQSFDVNQRFQSRVALKS). The helical transmembrane segment at 248–268 (TQAIFFLSMSQFLSCFLYTIF) threads the bilayer. The Extracellular portion of the chain corresponds to 269-291 (TKLYLTLQPDMTPLQSGLTLALT). The helical transmembrane segment at 292–312 (YTTPYACIAIPSLIMVTLTFI) threads the bilayer. Residues 313–343 (RNQRHRSINALRSQTETGDQYMQKIKKIWDK) lie on the Cytoplasmic side of the membrane.

It belongs to the nematode receptor-like protein sra family.

Its subcellular location is the membrane. Its function is as follows. A G protein-coupled receptor required for olfactory imprinting a requisite in ordorant response such as benzaldehyde and isoamylalcohol. This chain is Serpentine receptor class alpha-11, found in Caenorhabditis briggsae.